Consider the following 309-residue polypeptide: Ribosomal RNA small subunit methyltransferase H (309 aa).

S-adenosyl-L-methionine-binding positions include 41–43 (GGH), D61, F85, D102, and Q109.

The protein belongs to the methyltransferase superfamily. RsmH family.

It localises to the cytoplasm. The catalysed reaction is cytidine(1402) in 16S rRNA + S-adenosyl-L-methionine = N(4)-methylcytidine(1402) in 16S rRNA + S-adenosyl-L-homocysteine + H(+). Its function is as follows. Specifically methylates the N4 position of cytidine in position 1402 (C1402) of 16S rRNA. This is Ribosomal RNA small subunit methyltransferase H from Albidiferax ferrireducens (strain ATCC BAA-621 / DSM 15236 / T118) (Rhodoferax ferrireducens).